The primary structure comprises 228 residues: Ribosomal RNA small subunit methyltransferase G (228 aa).

Residues Gly-89, Leu-94, 140–141, and Arg-159 each bind S-adenosyl-L-methionine; that span reads VE.

The protein belongs to the methyltransferase superfamily. RNA methyltransferase RsmG family.

Its subcellular location is the cytoplasm. It catalyses the reaction guanosine(527) in 16S rRNA + S-adenosyl-L-methionine = N(7)-methylguanosine(527) in 16S rRNA + S-adenosyl-L-homocysteine. Specifically methylates the N7 position of guanine in position 527 of 16S rRNA. This is Ribosomal RNA small subunit methyltransferase G from Burkholderia vietnamiensis (strain G4 / LMG 22486) (Burkholderia cepacia (strain R1808)).